Here is a 1594-residue protein sequence, read N- to C-terminus: NAD-specific glutamate dehydrogenase (1594 aa).

K816 is a catalytic residue.

It belongs to the Glu/Leu/Phe/Val dehydrogenases family. Interacts with (unphosphorylated) GarA.

It catalyses the reaction L-glutamate + NAD(+) + H2O = 2-oxoglutarate + NH4(+) + NADH + H(+). Its activity is regulated as follows. Activity is inhibited by unphosphorylated GarA. Stimulated by manganese and magnesium. Its function is as follows. Catalyzes the reversible conversion of L-glutamate to 2-oxoglutarate. Highly specific for NAD. This is NAD-specific glutamate dehydrogenase (gdh) from Mycolicibacterium smegmatis (strain ATCC 700084 / mc(2)155) (Mycobacterium smegmatis).